The sequence spans 314 residues: Mitochondrial translation factor 2 (314 aa).

The tract at residues 111-136 (ENSSNIYDPSSPPDSPRKQQTHLGTI) is disordered.

As to quaternary structure, component of the MRH5C complex, composed of mrh5, ppr4, mtf2, and sls1. Proteins mtf2 and sls1 form a subcomplex that serves as a scaffold to bring mrh5 and ppr4 together. The MRH5C complex associates with the small subunit of the mitochondrial ribosome.

Translation activation factor that as part of the MRH5C complex specifically recruits cox1 mRNA to the mitochondrial ribosome for translation initiation. This Schizosaccharomyces pombe (strain 972 / ATCC 24843) (Fission yeast) protein is Mitochondrial translation factor 2.